The following is a 327-amino-acid chain: MVTPLNIIFAGTPEFAAQHLAALINSEHNIVAVYCPPDKPAGRGKKLTACATKLLAIEHDIIVEQPINFKNEEDQQQLAKYNADIMVVVAYGLLLPEVILNSPRLGCINVHGSILPKWRGAAPIQRSLEAGDKKTGVTIMQMDKGLDTGDMILSAECEIENTDTSASLYEKLANLGPTALVNTLTIMAEPDYQASNHNIAQDDELATYAKKLDKTEAELNWQFSADELHRKIRAYIPWPVAQFTFTESEGKQHRLRIWQASVQEYRGNADPGTIIKADKEGIEVATTSGSLRLEVIQLPGKKALAVKDILNGRSDWFVVGSTINKLG.

Residue 113-116 participates in (6S)-5,6,7,8-tetrahydrofolate binding; sequence SILP.

It belongs to the Fmt family.

It carries out the reaction L-methionyl-tRNA(fMet) + (6R)-10-formyltetrahydrofolate = N-formyl-L-methionyl-tRNA(fMet) + (6S)-5,6,7,8-tetrahydrofolate + H(+). Attaches a formyl group to the free amino group of methionyl-tRNA(fMet). The formyl group appears to play a dual role in the initiator identity of N-formylmethionyl-tRNA by promoting its recognition by IF2 and preventing the misappropriation of this tRNA by the elongation apparatus. This is Methionyl-tRNA formyltransferase from Colwellia psychrerythraea (strain 34H / ATCC BAA-681) (Vibrio psychroerythus).